Consider the following 949-residue polypeptide: Coiled-coil domain-containing protein 80 (949 aa).

A signal peptide spans 1 to 27; sequence MTWKMGPHFTMLLAMWLVCGSASQSSA. Disordered stretches follow at residues 24 to 79, 289 to 360, and 408 to 609; these read QSSA…RRKS, HVVQ…ATRA, and GPSV…SPRK. Gly residues predominate over residues 295–305; the sequence is NNGGGGGGSTG. Residues 308–328 are compositionally biased toward basic and acidic residues; that stretch reads SDKRKEDPRRTQIHPTREPPR. Positions 345-360 are enriched in low complexity; it reads RATTLPPAPVTTATRA. The span at 419–429 shows a compositional bias: basic and acidic residues; that stretch reads PRKEQQREKPQ. Positions 436 to 453 are enriched in polar residues; it reads KATNYGSFTATPPTTLWE. Residues 463–477 are compositionally biased toward basic and acidic residues; it reads RFRDNRTDKREHGHQ. A glycan (N-linked (GlcNAc...) asparagine) is linked at asparagine 467. A compositionally biased stretch (basic residues) spans 487 to 498; the sequence is KPIKGKLPKKKE. Composition is skewed to basic and acidic residues over residues 499–511, 534–548, and 556–581; these read KILS…KYDL, KESK…PEKE, and AKPD…EKEK. Glycyl lysine isopeptide (Lys-Gly) (interchain with G-Cter in SUMO2) cross-links involve residues lysine 544 and lysine 547. Residues 559-587 adopt a coiled-coil conformation; sequence DKLLRSEKQMKKAEKKSKQEKEKTKKKKA.

The protein belongs to the CCDC80 family. As to quaternary structure, binds to various extracellular matrix proteins. Post-translationally, phosphorylated. In terms of tissue distribution, isoform 2 is expressed in uterus, liver, lung, spleen, kidney, heart, bladder, skeletal muscle and brain (at protein level). Isoform 2 is expressed very low in mammary gland and intestine (at protein level). Isoform 2 is expressed in lactating mammary glands and mammary tumors (at protein level). Ubiquitous (isoform 1). Isoform 2 is expressed in ovary, uterus, mammary glands, liver, lung, spleen, kidney, heart, bladder, intestine, skeletal muscle and brain.

The protein resides in the secreted. The protein localises to the extracellular space. It is found in the extracellular matrix. In terms of biological role, promotes cell adhesion and matrix assembly. The polypeptide is Coiled-coil domain-containing protein 80 (Ccdc80) (Rattus norvegicus (Rat)).